The following is a 225-amino-acid chain: Transcriptional regulatory protein CssR (225 aa).

Residues 4 to 117 form the Response regulatory domain; sequence TIYLVEDEDN…ELIIRVQKLL (114 aa). Asp52 bears the 4-aspartylphosphate mark. A DNA-binding region (ompR/PhoB-type) is located at residues 129–224; the sequence is KNEIAVSSYR…IYGFGYRMMS (96 aa).

Post-translationally, phosphorylated by CssS.

The protein localises to the cytoplasm. Functionally, member of the two-component regulatory system CssS/CssR required to control the cellular response to secretion stress. This is Transcriptional regulatory protein CssR (cssR) from Bacillus subtilis (strain 168).